The primary structure comprises 135 residues: DNA-directed RNA polymerase subunit omega (135 aa).

A disordered region spans residues 107-135; it reads ASQESQDYEVDGEIDDEINDQDGDEEVSV. A compositionally biased stretch (acidic residues) spans 112-135; the sequence is QDYEVDGEIDDEINDQDGDEEVSV.

The protein belongs to the RNA polymerase subunit omega family. As to quaternary structure, the RNAP catalytic core consists of 2 alpha, 1 beta, 1 beta' and 1 omega subunit. When a sigma factor is associated with the core the holoenzyme is formed, which can initiate transcription.

It catalyses the reaction RNA(n) + a ribonucleoside 5'-triphosphate = RNA(n+1) + diphosphate. In terms of biological role, promotes RNA polymerase assembly. Latches the N- and C-terminal regions of the beta' subunit thereby facilitating its interaction with the beta and alpha subunits. The sequence is that of DNA-directed RNA polymerase subunit omega from Wolbachia pipientis wMel.